A 358-amino-acid chain; its full sequence is Probable RNA methyltransferase MXAN_6459 (358 aa).

Catalysis depends on Glu92, which acts as the Proton acceptor. Residues 99 to 327 (FDEKYVICVS…PVARRYSGGK (229 aa)) form the Radical SAM core domain. Residues Cys106 and Cys333 are joined by a disulfide bond. Residues Cys113, Cys117, and Cys120 each contribute to the [4Fe-4S] cluster site. Residues 160 to 161 (GE), Ser192, 215 to 217 (SVT), and Asp289 contribute to the S-adenosyl-L-methionine site. The active-site S-methylcysteine intermediate is the Cys333.

This sequence belongs to the radical SAM superfamily. RlmN family. [4Fe-4S] cluster serves as cofactor.

It localises to the cytoplasm. The polypeptide is Probable RNA methyltransferase MXAN_6459 (Myxococcus xanthus (strain DK1622)).